The primary structure comprises 587 residues: 5-aminolevulinate synthase, erythroid-specific, mitochondrial (587 aa).

The N-terminal 49 residues, 1 to 49, are a transit peptide targeting the mitochondrion; that stretch reads MVAAAMLLRSCPVLSKGPTGLLGKVAKTYQFLFGIGRCPILATQGPTCS. R163 contributes to the succinyl-CoA binding site. Residues C258 and F259 each coordinate pyridoxal 5'-phosphate. S280 and K299 together coordinate succinyl-CoA. Positions 332, 360, and 388 each coordinate pyridoxal 5'-phosphate. K391 is an active-site residue. K391 carries the post-translational modification N6-(pyridoxal phosphate)lysine. Pyridoxal 5'-phosphate-binding residues include T420 and T421. T508 is a succinyl-CoA binding site.

Belongs to the class-II pyridoxal-phosphate-dependent aminotransferase family. In terms of assembly, homodimer. Interacts with SUCLA2. Pyridoxal 5'-phosphate is required as a cofactor. In terms of tissue distribution, erythroid-specific.

It is found in the mitochondrion inner membrane. It carries out the reaction succinyl-CoA + glycine + H(+) = 5-aminolevulinate + CO2 + CoA. It participates in porphyrin-containing compound metabolism; protoporphyrin-IX biosynthesis; 5-aminolevulinate from glycine: step 1/1. In terms of biological role, catalyzes the pyridoxal 5'-phosphate (PLP)-dependent condensation of succinyl-CoA and glycine to form aminolevulinic acid (ALA), with CoA and CO2 as by-products. Contributes significantly to heme formation during erythropoiesis. This is 5-aminolevulinate synthase, erythroid-specific, mitochondrial (Alas2) from Rattus norvegicus (Rat).